The primary structure comprises 883 residues: Coatomer subunit gamma (883 aa).

The interval 1-25 (MNYFSLTSHKKHRGHPSAGPSNAYQ) is disordered. HEAT repeat units lie at residues 69–106 (REAT…IAED), 292–329 (RMLS…THPA), 331–364 (VTTC…GAES), 365–401 (SVER…KYPR), 404–439 (TVLM…ENAD), and 476–513 (ATPS…SCPA).

The protein belongs to the COPG family. In terms of assembly, oligomeric complex that consists of at least the alpha, beta, beta', gamma, delta, epsilon and zeta subunits. In terms of tissue distribution, expressed in ovary, testis, testis tip, young spermatocytes, germ cells and follicle cells. Up-regulated expression within centrally to posteriorly located germarial cysts and in migrating follicle cells. Widespread expression in imaginal disks including eye-antennal disk, wing disk, third leg and haltere disk.

The protein resides in the cytoplasm. The protein localises to the golgi apparatus membrane. Its subcellular location is the cytoplasmic vesicle. It localises to the COPI-coated vesicle membrane. It is found in the endoplasmic reticulum. Its function is as follows. The coatomer is a cytosolic protein complex that binds to dilysine motifs and reversibly associates with Golgi non-clathrin-coated vesicles, which further mediate biosynthetic protein transport from the ER, via the Golgi up to the trans Golgi network. Coatomer complex is required for budding from Golgi membranes, and is essential for the retrograde Golgi-to-ER transport of dilysine-tagged proteins. Required for limiting lipid storage in lipid droplets. Involved in the expansion of luminal extracellular matrices and apical membrane during tubulogenesis. Required in the tracheal epithelium for luminal protein secretion and diametric tube growth. In salivary glands, required for deposition of O-glycans and luminal extracellular matrix assembly. Required for epidermal morphogenesis and cuticle development. This is Coatomer subunit gamma from Drosophila melanogaster (Fruit fly).